Consider the following 260-residue polypeptide: Small ribosomal subunit protein uS3 (260 aa).

Positions 39-114 constitute a KH type-2 domain; that stretch reads LRQYIEQKLG…QIRINVVEVQ (76 aa). Residues 219–260 are disordered; that stretch reads EVAAPPPSTRDRDRDRGDRDREPRRRQQQRRRQQFEDRSNEG. Basic and acidic residues-rich tracts occupy residues 227 to 243 and 251 to 260; these read TRDRDRDRGDRDREPRR and QQFEDRSNEG.

It belongs to the universal ribosomal protein uS3 family. In terms of assembly, part of the 30S ribosomal subunit. Forms a tight complex with proteins S10 and S14.

Its function is as follows. Binds the lower part of the 30S subunit head. Binds mRNA in the 70S ribosome, positioning it for translation. The protein is Small ribosomal subunit protein uS3 of Trichormus variabilis (strain ATCC 29413 / PCC 7937) (Anabaena variabilis).